Here is a 454-residue protein sequence, read N- to C-terminus: tRNA modification GTPase MnmE (454 aa).

(6S)-5-formyl-5,6,7,8-tetrahydrofolate contacts are provided by R23, E80, and K120. The TrmE-type G domain occupies 216 to 377; sequence GMKVVIAGRP…LRNHLKQSMG (162 aa). K(+) is bound at residue N226. GTP contacts are provided by residues 226–231, 245–251, 270–273, 335–338, and 358–360; these read NAGKSS, TDIAGTT, DTAG, NKAD, and SAR. A Mg(2+)-binding site is contributed by S230. 3 residues coordinate K(+): T245, I247, and T250. T251 lines the Mg(2+) pocket. K454 serves as a coordination point for (6S)-5-formyl-5,6,7,8-tetrahydrofolate.

It belongs to the TRAFAC class TrmE-Era-EngA-EngB-Septin-like GTPase superfamily. TrmE GTPase family. As to quaternary structure, homodimer. Heterotetramer of two MnmE and two MnmG subunits. It depends on K(+) as a cofactor.

Its subcellular location is the cytoplasm. Its function is as follows. Exhibits a very high intrinsic GTPase hydrolysis rate. Involved in the addition of a carboxymethylaminomethyl (cmnm) group at the wobble position (U34) of certain tRNAs, forming tRNA-cmnm(5)s(2)U34. The polypeptide is tRNA modification GTPase MnmE (Shigella flexneri serotype 5b (strain 8401)).